A 300-amino-acid polypeptide reads, in one-letter code: uncharacterized protein (300 aa).

A compositionally biased stretch (polar residues) spans 1–11; it reads MYNEGVTSPSQ. Residues 1–20 are disordered; sequence MYNEGVTSPSQLARKKNATD. Positions 1–92 form a DNA-binding region, recombinase; that stretch reads MYNEGVTSPS…QEILITRKRR (92 aa). Residues 162 to 249 are a coiled coil; it reads SKENYFKELS…DLEFQKIEKE (88 aa).

This is an uncharacterized protein from Bacillus subtilis (strain 168).